The chain runs to 955 residues: 4-alpha-glucanotransferase DPE2 (955 aa).

Met1 carries the N-acetylmethionine modification. CBM20 domains are found at residues 13–122 (KSSK…LWQS) and 157–270 (SDQD…PWRG). Residues 925 to 955 (SGRSVPANVSGEDINKSRGEVIANGSTKPNP) are disordered.

The protein belongs to the disproportionating enzyme family.

The protein resides in the cytoplasm. Its subcellular location is the cytosol. It carries out the reaction Transfers a segment of a (1-&gt;4)-alpha-D-glucan to a new position in an acceptor, which may be glucose or a (1-&gt;4)-alpha-D-glucan.. With respect to regulation, inactivated in response to cold stress. Cytosolic alpha-glucanotransferase essential for the cytosolic metabolism of maltose, an intermediate on the pathway by which starch is converted to sucrose in leaves at night. Metabolizes maltose exported from the chloroplast and is specific for beta-maltose. May play a role in freezing tolerance. Temperature drop induces inactivation of DPE2 that leads to rapid accumulation of maltose, a solute that protects cells from freezing damage. The protein is 4-alpha-glucanotransferase DPE2 (DPE2) of Arabidopsis thaliana (Mouse-ear cress).